A 1527-amino-acid polypeptide reads, in one-letter code: MADSGASVPSPDLPDLDSLHASLSLPDIPSVAATSLSTSLPAISAKVSGFPSFSSHLPPPPLLSPPTPTTMVGWIGWVFSLVFQTIPSVLYWVITFSTITLPTWLFTLFSMSLTFTMNFTTLLLIVLGLVSTVSWFIRYRFLNMYSRLPPEPQRKEPQLDLFPDVQEGDSKPGLANYLDEFLSAIKVFGYLERPVFHELTRTMQTRKLIAGETLQLEEEKGFCLVVDGLVQIFVKSMRSGKHGLNGEVIEGSSDEDDQARDGKQGYQLLTEVKNGASMSSLFSILSLFTEDIRLRASEGSSSSMSSVQPSPARTTPAPFLDSPGEMLNGSPMVLPRDSEVDSSAINGEAEPLPPVPPLHLGESRASSYHPNGQSTASERVRGNRRKSVHPDIVARAMVDTTIAIIPASAFRRLTRLYPRATAHIVQVILTRLQRVTFATAHSYLGLTNEVLGIEKQMTKFTTYDLPNDIRGAALDRLKDKFLKEKDRLGSEEVTRGIALHNPYAGRRRRSMSFVRKEAALKAKMPLPKRPNSLINPERPFHGYDTAGVSPGDLLSTIQLSRFGPRHDQFATTPRLHSPLTEKERSPLRRSSLQRKDSVDEDALFRESILDCIMKGIGLTPSSHNALRKGSHSGELSPKLVSYDSRRQKAVFSNNAFGFIDAYEGSGDGDTESMMSMSVTSAGGTSPIVYLREDLLNDIEIVYFPKGAVLVEQGERHPGLYYVIDGFLDVGVQVNEKGDDLVGASRPGHAQPDEELFPTLKRTQTATSRGATAAAPINESKRKKPSRKSLYMIKPGGMQGYVGAMASYRSYTDVVAKTDVYVGFLPRASLERLAERYPIALLTLAKRLTGLLPRLLLHIDFALEWVQVNAGQVIYHQGDESDAIYITLNGRLRSVHEGKGGKMTVVGEHGQGESVGELEVMTESTRPATLHAIRDTELAKFPRSLFNSLAQEHTGITIQVSKLIAQRMRDLVENPMTEQGEPGNTGSVKTATSTLNLRTVGILPITTGVPVVEFGNRLLSALQQIGVTDGVTSLNQAAILNHLGRHAFSRMGKLKLSQYLADLEEKYGMVLYIADTNVNSPWTQTCISQADCILLVGLAESSPNVGEYERFLLGMKTTARKELVLLHADRYCPPGLTRKWLKNRVWINGGHHHIQMAFRLTAEPSHPQTKRLGTVLKQRVQILQAEIQKYTSRRIRQTPIYSAQTPFKGDFHRLARRLCGRAVGLVLGGGGARGIAHVGVIKALEEAGIPVDIVGGTSIGAFIGGLYARDADVVPMYGRAKKFAGRMGSIWRFALDLTYPSVSYTTGHEFNRGIFKTFGDSQIEDFWLEFYCNTTNISRSRAEYHSSGYVWRYVRASMSLAGLLPPICDEGSMLLDGGYIDNLTVAHMKTLGADVIFAIDVGSIDDNTPQGYGDSLSGMWSVINRWNPFSSIPNPPTLSEIQARLAYVSSIDNLERAKNIPGCLYMRPPIDRYGTLEFGNFDEIYQVGYAYGKEYLQKLKSQGSLPLPEENEEKKKLQRTLAPRRASI.

The Cytoplasmic portion of the chain corresponds to 1–73 (MADSGASVPS…SPPTPTTMVG (73 aa)). A helical membrane pass occupies residues 74–94 (WIGWVFSLVFQTIPSVLYWVI). Topologically, residues 95-116 (TFSTITLPTWLFTLFSMSLTFT) are lumenal. The chain crosses the membrane as a helical span at residues 117 to 137 (MNFTTLLLIVLGLVSTVSWFI). Residues 138-1527 (RYRFLNMYSR…RTLAPRRASI (1390 aa)) are Cytoplasmic-facing. A compositionally biased stretch (low complexity) spans 299–310 (GSSSSMSSVQPS). Disordered stretches follow at residues 299 to 387 (GSSS…RRKS), 567 to 596 (DQFA…QRKD), and 765 to 785 (ATSR…KKPS). Over residues 364-377 (RASSYHPNGQSTAS) the composition is skewed to polar residues. A nucleoside 3',5'-cyclic phosphate contacts are provided by residues 682–809 (GGTS…SYRS) and 846–966 (RLTG…IAQR). The PNPLA domain maps to 1224–1388 (LVLGGGGARG…IDNLTVAHMK (165 aa)). Positions 1228 to 1233 (GGGARG) match the GXGXXG motif. Positions 1255–1259 (GTSIG) match the GXSXG motif. The active-site Nucleophile is the serine 1257. The active-site Proton acceptor is aspartate 1375. Residues 1375-1377 (DGG) carry the DGA/G motif. The disordered stretch occupies residues 1504-1527 (LPLPEENEEKKKLQRTLAPRRASI).

The protein belongs to the NTE family.

It localises to the endoplasmic reticulum membrane. The catalysed reaction is a 1-acyl-sn-glycero-3-phosphocholine + H2O = sn-glycerol 3-phosphocholine + a fatty acid + H(+). Its activity is regulated as follows. Inhibited by organophosphorus esters. Its function is as follows. Intracellular phospholipase B that catalyzes the double deacylation of phosphatidylcholine (PC) to glycerophosphocholine (GroPCho). Plays an important role in membrane lipid homeostasis. Responsible for the rapid PC turnover in response to inositol, elevated temperatures, or when choline is present in the growth medium. The protein is Lysophospholipase nte1 (nte1) of Emericella nidulans (strain FGSC A4 / ATCC 38163 / CBS 112.46 / NRRL 194 / M139) (Aspergillus nidulans).